The chain runs to 444 residues: Glutamate--tRNA ligase 1 (444 aa).

Positions 7–17 (PSPTGYLHVGN) match the 'HIGH' region motif. The 'KMSKS' region motif lies at 238–242 (KISKR). K241 lines the ATP pocket.

This sequence belongs to the class-I aminoacyl-tRNA synthetase family. Glutamate--tRNA ligase type 1 subfamily. Monomer.

Its subcellular location is the cytoplasm. The catalysed reaction is tRNA(Glu) + L-glutamate + ATP = L-glutamyl-tRNA(Glu) + AMP + diphosphate. Its function is as follows. Catalyzes the attachment of glutamate to tRNA(Glu) in a two-step reaction: glutamate is first activated by ATP to form Glu-AMP and then transferred to the acceptor end of tRNA(Glu). The protein is Glutamate--tRNA ligase 1 of Wolbachia pipientis subsp. Culex pipiens (strain wPip).